A 375-amino-acid polypeptide reads, in one-letter code: Protein RecA (375 aa).

Residue 88–95 (GPESSGKT) participates in ATP binding.

It belongs to the RecA family.

The protein localises to the cytoplasm. Can catalyze the hydrolysis of ATP in the presence of single-stranded DNA, the ATP-dependent uptake of single-stranded DNA by duplex DNA, and the ATP-dependent hybridization of homologous single-stranded DNAs. It interacts with LexA causing its activation and leading to its autocatalytic cleavage. In Rhodopirellula baltica (strain DSM 10527 / NCIMB 13988 / SH1), this protein is Protein RecA.